We begin with the raw amino-acid sequence, 481 residues long: UDP-glucose 6-dehydrogenase (481 aa).

NAD(+) contacts are provided by residues 16-21, aspartate 41, lysine 46, 94-98, 135-136, and glutamate 172; these read GAGYVG, VNTPT, and ST. Substrate-binding positions include 168–172, 227–231, arginine 267, and 274–280; these read EFLAE, KLVAN, and QASVGFG. Cysteine 283 acts as the Nucleophile in catalysis. 283–286 is an NAD(+) binding site; sequence CFQK. Position 345-346 (345-346) interacts with substrate; the sequence is FK. Arginine 353 is an NAD(+) binding site. Arginine 447 contacts substrate.

This sequence belongs to the UDP-glucose/GDP-mannose dehydrogenase family. As to expression, expressed in the vulva and in oocytes.

It carries out the reaction UDP-alpha-D-glucose + 2 NAD(+) + H2O = UDP-alpha-D-glucuronate + 2 NADH + 3 H(+). Its pathway is nucleotide-sugar biosynthesis; UDP-alpha-D-glucuronate biosynthesis; UDP-alpha-D-glucuronate from UDP-alpha-D-glucose: step 1/1. In terms of biological role, involved in the biosynthesis of glycosaminoglycans; hyaluronan, chondroitin sulfate, and heparan sulfate. The protein is UDP-glucose 6-dehydrogenase (sqv-4) of Caenorhabditis elegans.